The sequence spans 171 residues: Lipoprotein signal peptidase (171 aa).

The next 3 membrane-spanning stretches (helical) occupy residues 8-28 (SFLW…YIVV), 64-84 (WQQY…VYFL), and 99-119 (ALII…GFVV). Residues D120 and D138 contribute to the active site. A helical membrane pass occupies residues 133 to 153 (VFNIADIAICIGAGLLVLDAF).

The protein belongs to the peptidase A8 family.

It localises to the cell inner membrane. The catalysed reaction is Release of signal peptides from bacterial membrane prolipoproteins. Hydrolyzes -Xaa-Yaa-Zaa-|-(S,diacylglyceryl)Cys-, in which Xaa is hydrophobic (preferably Leu), and Yaa (Ala or Ser) and Zaa (Gly or Ala) have small, neutral side chains.. Its pathway is protein modification; lipoprotein biosynthesis (signal peptide cleavage). Its function is as follows. This protein specifically catalyzes the removal of signal peptides from prolipoproteins. The chain is Lipoprotein signal peptidase from Haemophilus influenzae (strain ATCC 51907 / DSM 11121 / KW20 / Rd).